Consider the following 455-residue polypeptide: Bifunctional protein GlmU (455 aa).

The interval 1 to 226 (MSLDIVILAA…AMEVQGANDR (226 aa)) is pyrophosphorylase. UDP-N-acetyl-alpha-D-glucosamine-binding positions include 8–11 (LAAG), lysine 22, glutamine 73, 78–79 (GT), 99–101 (YGD), glycine 136, glutamate 151, asparagine 166, and asparagine 224. Aspartate 101 lines the Mg(2+) pocket. Asparagine 224 provides a ligand contact to Mg(2+). Residues 227-247 (KQLSELERHYQMREARRLMAA) form a linker region. Positions 248–455 (GVTLRDPARF…WKRPVKISKD (208 aa)) are N-acetyltransferase. UDP-N-acetyl-alpha-D-glucosamine contacts are provided by arginine 330 and lysine 348. The Proton acceptor role is filled by histidine 360. 2 residues coordinate UDP-N-acetyl-alpha-D-glucosamine: tyrosine 363 and asparagine 374. Residues alanine 377, 383–384 (NY), serine 402, alanine 420, and arginine 437 contribute to the acetyl-CoA site.

It in the N-terminal section; belongs to the N-acetylglucosamine-1-phosphate uridyltransferase family. The protein in the C-terminal section; belongs to the transferase hexapeptide repeat family. In terms of assembly, homotrimer. It depends on Mg(2+) as a cofactor.

It is found in the cytoplasm. It carries out the reaction alpha-D-glucosamine 1-phosphate + acetyl-CoA = N-acetyl-alpha-D-glucosamine 1-phosphate + CoA + H(+). The catalysed reaction is N-acetyl-alpha-D-glucosamine 1-phosphate + UTP + H(+) = UDP-N-acetyl-alpha-D-glucosamine + diphosphate. The protein operates within nucleotide-sugar biosynthesis; UDP-N-acetyl-alpha-D-glucosamine biosynthesis; N-acetyl-alpha-D-glucosamine 1-phosphate from alpha-D-glucosamine 6-phosphate (route II): step 2/2. Its pathway is nucleotide-sugar biosynthesis; UDP-N-acetyl-alpha-D-glucosamine biosynthesis; UDP-N-acetyl-alpha-D-glucosamine from N-acetyl-alpha-D-glucosamine 1-phosphate: step 1/1. It participates in bacterial outer membrane biogenesis; LPS lipid A biosynthesis. Catalyzes the last two sequential reactions in the de novo biosynthetic pathway for UDP-N-acetylglucosamine (UDP-GlcNAc). The C-terminal domain catalyzes the transfer of acetyl group from acetyl coenzyme A to glucosamine-1-phosphate (GlcN-1-P) to produce N-acetylglucosamine-1-phosphate (GlcNAc-1-P), which is converted into UDP-GlcNAc by the transfer of uridine 5-monophosphate (from uridine 5-triphosphate), a reaction catalyzed by the N-terminal domain. The polypeptide is Bifunctional protein GlmU (Pseudomonas syringae pv. syringae (strain B728a)).